A 462-amino-acid chain; its full sequence is Protein Tube (462 aa).

Residues 27–152 (YSRNTELRRV…SAADFVALDF (126 aa)) form the Death domain. A disordered region spans residues 218-265 (RDKSVPQPSGNTPPIAPPRRQQRSTTNSNFATLTGTGTTSTTIPNVPN). Residues 249-259 (TLTGTGTTSTT) show a composition bias toward low complexity. 2 consecutive repeat copies span residues 262-269 (NVPNLTIL) and 286-293 (NIPDLSIL). A 5 X approximate repeats region spans residues 262–460 (NVPNLTILNP…ACNIPDLSEL (199 aa)). A compositionally biased stretch (polar residues) spans 301 to 317 (RATVSDNPSNRTSSTDP). The tract at residues 301–462 (RATVSDNPSN…NIPDLSELQQ (162 aa)) is disordered. Copy 3 of the repeat occupies 319–326 (NIPRITLL). Low complexity predominate over residues 342-354 (AKASTATTSTASS). Residues 355 to 367 (NNLPMISALNISK) show a composition bias toward polar residues. The stretch at 356 to 363 (NLPMISAL) is repeat 4. Positions 368–377 (GSRETLRPES) are enriched in basic and acidic residues. Residues 387–403 (DDDDDNDGEEDGEEEYP) are compositionally biased toward acidic residues. The span at 409-424 (NLSNSEQQSSNNDSSL) shows a compositional bias: low complexity. Positions 425–438 (TTVTGTSGDNSFEL) are enriched in polar residues. The segment covering 439–449 (TNDSSSTSNDD) has biased composition (low complexity). The stretch at 453-460 (NIPDLSEL) is repeat 5.

As to quaternary structure, interacts (via Death domain) with pll (via Death domain). Phosphorylated by pll.

It is found in the cytoplasm. The protein localises to the cell membrane. In terms of biological role, plays an essential role in the Tl receptor signaling pathway that establishes embryonic dorsoventral polarity; the signal directs import of dl into ventral and ventrolateral nuclei, thereby establishing dorsoventral polarity. Tub recruits pll to the plasma membrane and protein-protein interaction activates pll. Also has a role in pupal pattern formation. This chain is Protein Tube (tub), found in Drosophila melanogaster (Fruit fly).